We begin with the raw amino-acid sequence, 123 residues long: Cyclic ether formation enzyme xenC (123 aa).

The N-terminal stretch at 1–24 (MSSLLLSDVLSYGIFGFSALCVQA) is a signal peptide. The next 2 helical transmembrane spans lie at 58-78 (SALR…LWSP) and 102-122 (LGES…AILV).

Belongs to the cyclic ether formation enzyme xenC family.

The protein localises to the membrane. It functions in the pathway mycotoxin biosynthesis. In terms of biological role, cyclic ether formation enzyme; part of the gene cluster that mediates the biosynthesis of xenoacremones such as xenoacremone A, a compound that shows inhibitory activity toward the PI3K/AKT signaling pathway and which has the ability to induce apoptosis of A549 lung cancer cells. Within the pathway, cooperation of the hybrid PKS-NRPS xenE and the trans-acting enoyl reductase xenG is responsible for the formation of the reduced tyrosine-nonaketide derivative. The alpha/beta hydrolase xenA then accelerates intramolecular nucleophilic attack to give a pyrrolidone derivative. Subsequently, three enzymes, xenF, xenD, and xenC, coordinately participate in the conversion to xenoacremone B. XenF catalyzes sigmatropic rearrangement to form an A-ring, which leads to an unusual intermediate with a hexane ring, which is required for the formation of the tricarbocyclic product. Epoxidation catalyzed by xenD and the formation of the paracyclophane ether catalyzed by xenC initiate a spontaneous intramolecular Diels-Alder (IMDA) reaction to yield xenoacremone B. Spontaneous hydration of xenoacremone B leads to the formation of xenoacremone A, which undergoes subsequent methylation to afford xenoacremone C. The protein is Cyclic ether formation enzyme xenC of Xenoacremonium sinensis (Endophyte fungus).